The primary structure comprises 288 residues: Probable endonuclease 4 (288 aa).

His-75, His-115, Glu-153, Asp-187, His-190, His-224, Asp-237, His-239, and Glu-269 together coordinate Zn(2+).

The protein belongs to the AP endonuclease 2 family. Zn(2+) is required as a cofactor.

The enzyme catalyses Endonucleolytic cleavage to 5'-phosphooligonucleotide end-products.. Endonuclease IV plays a role in DNA repair. It cleaves phosphodiester bonds at apurinic or apyrimidinic (AP) sites, generating a 3'-hydroxyl group and a 5'-terminal sugar phosphate. This is Probable endonuclease 4 from Chlamydia trachomatis serovar A (strain ATCC VR-571B / DSM 19440 / HAR-13).